The primary structure comprises 186 residues: Ribosome-recycling factor (186 aa).

This sequence belongs to the RRF family.

The protein localises to the cytoplasm. Its function is as follows. Responsible for the release of ribosomes from messenger RNA at the termination of protein biosynthesis. May increase the efficiency of translation by recycling ribosomes from one round of translation to another. The sequence is that of Ribosome-recycling factor from Rickettsia typhi (strain ATCC VR-144 / Wilmington).